A 706-amino-acid chain; its full sequence is Elongation factor G (706 aa).

The tr-type G domain maps to 15-291 (LKTRNIGISA…GVLDYLASPV (277 aa)). GTP contacts are provided by residues 24–31 (AHIDSGKT), 91–95 (DTPGH), and 145–148 (NKLD).

It belongs to the TRAFAC class translation factor GTPase superfamily. Classic translation factor GTPase family. EF-G/EF-2 subfamily.

Its subcellular location is the cytoplasm. Functionally, catalyzes the GTP-dependent ribosomal translocation step during translation elongation. During this step, the ribosome changes from the pre-translocational (PRE) to the post-translocational (POST) state as the newly formed A-site-bound peptidyl-tRNA and P-site-bound deacylated tRNA move to the P and E sites, respectively. Catalyzes the coordinated movement of the two tRNA molecules, the mRNA and conformational changes in the ribosome. The protein is Elongation factor G of Leptospira borgpetersenii serovar Hardjo-bovis (strain JB197).